The chain runs to 255 residues: Small ribosomal subunit protein eS1 (255 aa).

A compositionally biased stretch (basic residues) spans 1 to 18; that stretch reads MAVGKNKRLSKGKKGLKK. The disordered stretch occupies residues 1–22; that stretch reads MAVGKNKRLSKGKKGLKKRAQD. Ala-2 is modified (N-acetylalanine; partial).

The protein belongs to the eukaryotic ribosomal protein eS1 family. In terms of assembly, component of the small ribosomal subunit. Mature ribosomes consist of a small (40S) and a large (60S) subunit. The 40S subunit contains about 33 different proteins and 1 molecule of RNA (18S). The 60S subunit contains about 49 different proteins and 3 molecules of RNA (25S, 5.8S and 5S).

It is found in the cytoplasm. This chain is Small ribosomal subunit protein eS1, found in Uncinocarpus reesii (strain UAMH 1704).